Reading from the N-terminus, the 30-residue chain is GTPCGESCVWIPCISSAVGCSCKNKVCYKN.

The cyclopeptide (Gly-Asn) cross-link spans 1 to 30; that stretch reads GTPCGESCVWIPCISSAVGCSCKNKVCYKN. 3 cysteine pairs are disulfide-bonded: C4–C20, C8–C22, and C13–C27.

This is a cyclic peptide.

Functionally, probably participates in a plant defense mechanism. In Viola odorata (Sweet violet), this protein is Cycloviolacin-O5.